Here is a 150-residue protein sequence, read N- to C-terminus: D-aminoacyl-tRNA deacylase (150 aa).

The Gly-cisPro motif, important for rejection of L-amino acids signature appears at 138–139; sequence GP.

This sequence belongs to the DTD family. In terms of assembly, homodimer.

It localises to the cytoplasm. The catalysed reaction is glycyl-tRNA(Ala) + H2O = tRNA(Ala) + glycine + H(+). It catalyses the reaction a D-aminoacyl-tRNA + H2O = a tRNA + a D-alpha-amino acid + H(+). Functionally, an aminoacyl-tRNA editing enzyme that deacylates mischarged D-aminoacyl-tRNAs. Also deacylates mischarged glycyl-tRNA(Ala), protecting cells against glycine mischarging by AlaRS. Acts via tRNA-based rather than protein-based catalysis; rejects L-amino acids rather than detecting D-amino acids in the active site. By recycling D-aminoacyl-tRNA to D-amino acids and free tRNA molecules, this enzyme counteracts the toxicity associated with the formation of D-aminoacyl-tRNA entities in vivo and helps enforce protein L-homochirality. This chain is D-aminoacyl-tRNA deacylase, found in Opitutus terrae (strain DSM 11246 / JCM 15787 / PB90-1).